A 51-amino-acid chain; its full sequence is Large ribosomal subunit protein bL33 (51 aa).

This sequence belongs to the bacterial ribosomal protein bL33 family.

This Psychrobacter sp. (strain PRwf-1) protein is Large ribosomal subunit protein bL33.